A 153-amino-acid polypeptide reads, in one-letter code: Large ribosomal subunit protein uL15 (153 aa).

The interval 21–41 (RGIGSGKGKTGGRGIKGQKSR) is disordered. The segment covering 23–35 (IGSGKGKTGGRGI) has biased composition (gly residues).

Belongs to the universal ribosomal protein uL15 family. As to quaternary structure, part of the 50S ribosomal subunit.

Functionally, binds to the 23S rRNA. In Rickettsia massiliae (strain Mtu5), this protein is Large ribosomal subunit protein uL15.